Here is a 494-residue protein sequence, read N- to C-terminus: Glycerol kinase (494 aa).

Residue threonine 13 coordinates ADP. ATP-binding residues include threonine 13, threonine 14, and serine 15. Sn-glycerol 3-phosphate is bound at residue threonine 13. Arginine 17 provides a ligand contact to ADP. The sn-glycerol 3-phosphate site is built by arginine 83, glutamate 84, tyrosine 135, and aspartate 244. Glycerol-binding residues include arginine 83, glutamate 84, tyrosine 135, aspartate 244, and glutamine 245. Residues threonine 266 and glycine 309 each contribute to the ADP site. ATP-binding residues include threonine 266, glycine 309, glutamine 313, and glycine 410. 2 residues coordinate ADP: glycine 410 and asparagine 414.

The protein belongs to the FGGY kinase family.

It carries out the reaction glycerol + ATP = sn-glycerol 3-phosphate + ADP + H(+). The protein operates within polyol metabolism; glycerol degradation via glycerol kinase pathway; sn-glycerol 3-phosphate from glycerol: step 1/1. Its activity is regulated as follows. Inhibited by fructose 1,6-bisphosphate (FBP). In terms of biological role, key enzyme in the regulation of glycerol uptake and metabolism. Catalyzes the phosphorylation of glycerol to yield sn-glycerol 3-phosphate. The protein is Glycerol kinase of Shewanella baltica (strain OS223).